The primary structure comprises 366 residues: Holliday junction branch migration complex subunit RuvB (366 aa).

A large ATPase domain (RuvB-L) region spans residues 3-183; that stretch reads ADGLVSAAAS…FGFTAHLDFY (181 aa). Residues Leu-22, Arg-23, Gly-64, Lys-67, Thr-68, Ser-69, 130–132, Arg-173, Tyr-183, and Arg-220 each bind ATP; that span reads EDF. Residue Thr-68 participates in Mg(2+) binding. Residues 184–254 are small ATPAse domain (RuvB-S); that stretch reads APDELARVLT…VARAALRIYD (71 aa). Residues 257–366 form a head domain (RuvB-H) region; it reads GLGLDRLDRA…PEDGLHPGGG (110 aa). The DNA site is built by Arg-312 and Arg-317.

This sequence belongs to the RuvB family. As to quaternary structure, homohexamer. Forms an RuvA(8)-RuvB(12)-Holliday junction (HJ) complex. HJ DNA is sandwiched between 2 RuvA tetramers; dsDNA enters through RuvA and exits via RuvB. An RuvB hexamer assembles on each DNA strand where it exits the tetramer. Each RuvB hexamer is contacted by two RuvA subunits (via domain III) on 2 adjacent RuvB subunits; this complex drives branch migration. In the full resolvosome a probable DNA-RuvA(4)-RuvB(12)-RuvC(2) complex forms which resolves the HJ.

It localises to the cytoplasm. The catalysed reaction is ATP + H2O = ADP + phosphate + H(+). In terms of biological role, the RuvA-RuvB-RuvC complex processes Holliday junction (HJ) DNA during genetic recombination and DNA repair, while the RuvA-RuvB complex plays an important role in the rescue of blocked DNA replication forks via replication fork reversal (RFR). RuvA specifically binds to HJ cruciform DNA, conferring on it an open structure. The RuvB hexamer acts as an ATP-dependent pump, pulling dsDNA into and through the RuvAB complex. RuvB forms 2 homohexamers on either side of HJ DNA bound by 1 or 2 RuvA tetramers; 4 subunits per hexamer contact DNA at a time. Coordinated motions by a converter formed by DNA-disengaged RuvB subunits stimulates ATP hydrolysis and nucleotide exchange. Immobilization of the converter enables RuvB to convert the ATP-contained energy into a lever motion, pulling 2 nucleotides of DNA out of the RuvA tetramer per ATP hydrolyzed, thus driving DNA branch migration. The RuvB motors rotate together with the DNA substrate, which together with the progressing nucleotide cycle form the mechanistic basis for DNA recombination by continuous HJ branch migration. Branch migration allows RuvC to scan DNA until it finds its consensus sequence, where it cleaves and resolves cruciform DNA. The polypeptide is Holliday junction branch migration complex subunit RuvB (Frankia alni (strain DSM 45986 / CECT 9034 / ACN14a)).